Reading from the N-terminus, the 58-residue chain is Arabinogalactan protein 21 (58 aa).

The N-terminal stretch at 1 to 24 (MEAMKMKMMVFIMVVAVAFSAATA) is a signal peptide. 4-hydroxyproline is present on residues Pro-30, Pro-32, and Pro-34. Residues Pro-30, Pro-32, and Pro-34 are each glycosylated (O-linked (Ara...) hydroxyproline). A lipid anchor (GPI-anchor amidated serine) is attached at Ser-36. A propeptide spans 37–58 (DAAMFVPALFASVVALASGFIF) (removed in mature form).

The protein belongs to the AG-peptide AGP family. Contains 4-hydroxyproline; hydroxylated on Pro-30, Pro-32 and Pro-34. In terms of processing, O-glycosylated on hydroxyprolines; noncontiguous hydroxylproline residues are glycosylated with arabinogalactan.

It localises to the cell membrane. Its function is as follows. Proteoglycan that seems to be implicated in diverse developmental roles such as differentiation, cell-cell recognition, embryogenesis and programmed cell death. This chain is Arabinogalactan protein 21, found in Arabidopsis thaliana (Mouse-ear cress).